We begin with the raw amino-acid sequence, 434 residues long: Glutamate-1-semialdehyde 2,1-aminomutase (434 aa).

Lysine 266 carries the post-translational modification N6-(pyridoxal phosphate)lysine.

It belongs to the class-III pyridoxal-phosphate-dependent aminotransferase family. HemL subfamily. In terms of assembly, homodimer. Requires pyridoxal 5'-phosphate as cofactor.

The protein resides in the cytoplasm. It carries out the reaction (S)-4-amino-5-oxopentanoate = 5-aminolevulinate. The protein operates within porphyrin-containing compound metabolism; protoporphyrin-IX biosynthesis; 5-aminolevulinate from L-glutamyl-tRNA(Glu): step 2/2. The chain is Glutamate-1-semialdehyde 2,1-aminomutase from Psychrobacter sp. (strain PRwf-1).